The following is a 415-amino-acid chain: G patch domain-containing protein 4 (415 aa).

Met1 carries the N-acetylmethionine modification. Thr4 carries the post-translational modification Phosphothreonine. Residues 11–57 enclose the G-patch domain; it reads GMKFAEEQLLKHGWTQGKGLGRRENGITQALKVTLKQDNHGVGHDPA. Lys46 is covalently cross-linked (Glycyl lysine isopeptide (Lys-Gly) (interchain with G-Cter in SUMO2)). Thr116 carries the phosphothreonine modification. 2 disordered regions span residues 116-141 and 191-415; these read TSGEEKPDRDLGNCSDVDNHEPTPPK and LGTS…VDLS. The span at 118–141 shows a compositional bias: basic and acidic residues; the sequence is GEEKPDRDLGNCSDVDNHEPTPPK. Ser130 carries the phosphoserine modification. A compositionally biased stretch (polar residues) spans 191-201; that stretch reads LGTSQPLTDSE. Over residues 224 to 239 the composition is skewed to basic and acidic residues; that stretch reads SLGDELLGHTDRSFRD. Ser258 carries the post-translational modification Phosphoserine. Over residues 335-345 the composition is skewed to acidic residues; sequence EDLDTQEEEGK. The span at 353–364 shows a compositional bias: basic residues; sequence RKVRRKDKRKRQ. A compositionally biased stretch (basic and acidic residues) spans 387–397; the sequence is AGERSRQYPKE. The segment covering 398 to 407 has biased composition (basic residues); sequence RAKKKKRKRD.

The sequence is that of G patch domain-containing protein 4 (Gpatch4) from Mus musculus (Mouse).